The primary structure comprises 295 residues: Aquaporin-9 (295 aa).

The Cytoplasmic portion of the chain corresponds to 1–24; it reads MPSEKDRAKKNLVQRLALKSCLAK. Residues 25 to 43 traverse the membrane as a helical segment; the sequence is ETLSEFLGTFIMIVLGCGS. Over 44–57 the chain is Extracellular; sequence IAQAVLSREKAGGI. A helical membrane pass occupies residues 58-77; the sequence is ITINIGFATAVVMALYATFG. Topologically, residues 78-79 are cytoplasmic; it reads VS. The segment at residues 80–92 is an intramembrane region (discontinuously helical); the sequence is GGHINPAVSFAMC. Positions 84–86 match the NPA 1 motif; sequence NPA. Topologically, residues 93–98 are cytoplasmic; it reads TFGRME. Residues 99-123 form a helical membrane-spanning segment; that stretch reads WFKFPFYVGAQLLGAFVGAATVFGI. At 124–160 the chain is on the extracellular side; that stretch reads YYDGLMAFADGKLLITGENGTAFIFATYPKPFVSVPG. A helical transmembrane segment spans residues 161–178; it reads AFVDQVVSTMFLLLIVFA. Topologically, residues 179 to 190 are cytoplasmic; it reads IFDSRNLGVPRG. Residues 191–207 traverse the membrane as a helical segment; sequence LEPIVIGLLIIVISCSL. Residues 208 to 210 are Extracellular-facing; it reads GLN. The discontinuously helical intramembrane region spans 211–225; the sequence is SGCAMNPARDLSPRL. The NPA 2 motif lies at 216–218; that stretch reads NPA. Residues 226–243 lie on the Extracellular side of the membrane; that stretch reads FTALAGWGFEVFTFGNNF. A helical transmembrane segment spans residues 244-264; that stretch reads WWIPVVGPMIGAVLGGLIYVL. Residues 265 to 295 are Cytoplasmic-facing; that stretch reads FIQMHHSNPDPEVKAEPAENNLEKHELSVIM.

The protein belongs to the MIP/aquaporin (TC 1.A.8) family. As to quaternary structure, homotetramer; each monomer provides an independent glycerol/water pore.

Its subcellular location is the cell membrane. The protein resides in the basolateral cell membrane. The enzyme catalyses glycerol(in) = glycerol(out). The catalysed reaction is H2O(in) = H2O(out). It carries out the reaction urea(in) = urea(out). It catalyses the reaction (S)-lactate(in) = (S)-lactate(out). The enzyme catalyses NH4(+)(in) = NH4(+)(out). The catalysed reaction is uracil(in) = uracil(out). It carries out the reaction adenine(out) = adenine(in). It catalyses the reaction 3-hydroxybutanoate(in) = 3-hydroxybutanoate(out). The enzyme catalyses D-sorbitol(in) = D-sorbitol(out). The catalysed reaction is D-mannitol(in) = D-mannitol(out). It carries out the reaction H2O2(out) = H2O2(in). It catalyses the reaction arsenite(in) = arsenite(out). The enzyme catalyses selenite(in) = selenite(out). Aquaglyceroporins form homotetrameric transmembrane channels, with each monomer independently mediating glycerol and water transport across the plasma membrane along their osmotic gradient. AQP9 is the primary route for glycerol uptake in hepatocytes, supporting hepatic gluconeogenesis. It exhibits broad specificity and may transport various small, non-charged solutes, including carbamides, polyols, purines, and pyrimidines. AQP9 may also facilitate hepatic urea extrusion. Due to its permeability to lactate, AQP9 might participate in the astrocyte-to-neuron lactate shuttle, supplying neurons with energy. Additionally, AQP9 is permeable to arsenite, contributing to arsenic excretion by the liver and providing partial protection against arsenic toxicity. It is also permeable to H2O2 in vivo. Could also be permeable to ammonium. The sequence is that of Aquaporin-9 from Mus musculus (Mouse).